The primary structure comprises 251 residues: Triosephosphate isomerase (251 aa).

Asn9–Lys11 contacts substrate. Catalysis depends on His94, which acts as the Electrophile. The active-site Proton acceptor is Glu166. Residues Gly172, Ser211, and Gly232–Gly233 contribute to the substrate site.

Belongs to the triosephosphate isomerase family. As to quaternary structure, homodimer.

The protein resides in the cytoplasm. It carries out the reaction D-glyceraldehyde 3-phosphate = dihydroxyacetone phosphate. It participates in carbohydrate biosynthesis; gluconeogenesis. It functions in the pathway carbohydrate degradation; glycolysis; D-glyceraldehyde 3-phosphate from glycerone phosphate: step 1/1. Involved in the gluconeogenesis. Catalyzes stereospecifically the conversion of dihydroxyacetone phosphate (DHAP) to D-glyceraldehyde-3-phosphate (G3P). In Xanthomonas axonopodis pv. citri (strain 306), this protein is Triosephosphate isomerase.